The primary structure comprises 533 residues: (E)-beta-farnesene synthase (533 aa).

Mg(2+) is bound by residues Asp286, Asp290, Asn430, Ser434, and Glu438. Positions 286–290 (DDMMD) match the DDXXD motif motif.

The protein belongs to the terpene synthase family. The cofactor is Mg(2+). Requires Co(2+) as cofactor. It depends on Mn(2+) as a cofactor.

Its subcellular location is the cytoplasm. It catalyses the reaction (2E,6E)-farnesyl diphosphate = (E)-beta-farnesene + diphosphate. It participates in secondary metabolite biosynthesis; terpenoid biosynthesis. In terms of biological role, sesquiterpene cyclase catalyzing the production of sixfold more beta-farnesene than alpha-bergamotene from farnesyl diphosphate. Involved in indirect defense by producing volatile signals attracting natural enemies of herbivores. This chain is (E)-beta-farnesene synthase, found in Zea perennis (Perennial teosinte).